Here is a 118-residue protein sequence, read N- to C-terminus: Small ribosomal subunit protein uS13 (118 aa).

The segment at 94–118 is disordered; sequence GLPVRGQRTKTNARTRKGPRKPIKK.

This sequence belongs to the universal ribosomal protein uS13 family. As to quaternary structure, part of the 30S ribosomal subunit. Forms a loose heterodimer with protein S19. Forms two bridges to the 50S subunit in the 70S ribosome.

Its function is as follows. Located at the top of the head of the 30S subunit, it contacts several helices of the 16S rRNA. In the 70S ribosome it contacts the 23S rRNA (bridge B1a) and protein L5 of the 50S subunit (bridge B1b), connecting the 2 subunits; these bridges are implicated in subunit movement. Contacts the tRNAs in the A and P-sites. In Klebsiella pneumoniae (strain 342), this protein is Small ribosomal subunit protein uS13.